The chain runs to 1118 residues: Phytochrome 1 (1118 aa).

Low complexity predominate over residues Met1 to Ser10. The interval Met1–Ala23 is disordered. One can recognise a GAF domain in the interval Asp212–Val391. Phytochromobilin is bound at residue Cys317. PAS domains are found at residues Val606–Glu677 and Asp740–Met811. The Histidine kinase domain maps to Tyr887–His1110.

This sequence belongs to the phytochrome family. Homodimer. In terms of processing, contains one covalently linked phytochromobilin chromophore.

Functionally, regulatory photoreceptor which exists in two forms that are reversibly interconvertible by light: the Pr form that absorbs maximally in the red region of the spectrum and the Pfr form that absorbs maximally in the far-red region. Photoconversion of Pr to Pfr induces an array of morphogenic responses, whereas reconversion of Pfr to Pr cancels the induction of those responses. Pfr controls the expression of a number of nuclear genes including those encoding the small subunit of ribulose-bisphosphate carboxylase, chlorophyll A/B binding protein, protochlorophyllide reductase, rRNA, etc. It also controls the expression of its own gene(s) in a negative feedback fashion. This is Phytochrome 1 (PHY1) from Adiantum capillus-veneris (Maidenhair fern).